An 899-amino-acid polypeptide reads, in one-letter code: Protein translocase subunit SecA (899 aa).

ATP-binding positions include Gln87, 105–109 (GEGKT), and Asp516. Cys884, Cys886, Cys895, and His896 together coordinate Zn(2+).

The protein belongs to the SecA family. As to quaternary structure, monomer and homodimer. Part of the essential Sec protein translocation apparatus which comprises SecA, SecYEG and auxiliary proteins SecDF. Other proteins may also be involved. Zn(2+) serves as cofactor.

It localises to the cell inner membrane. The protein localises to the cytoplasm. The catalysed reaction is ATP + H2O + cellular proteinSide 1 = ADP + phosphate + cellular proteinSide 2.. Its function is as follows. Part of the Sec protein translocase complex. Interacts with the SecYEG preprotein conducting channel. Has a central role in coupling the hydrolysis of ATP to the transfer of proteins into and across the cell membrane, serving as an ATP-driven molecular motor driving the stepwise translocation of polypeptide chains across the membrane. In Borreliella afzelii (strain PKo) (Borrelia afzelii), this protein is Protein translocase subunit SecA.